The primary structure comprises 274 residues: NH(3)-dependent NAD(+) synthetase (274 aa).

46–53 (GISGGQDS) contacts ATP. Asp-52 lines the Mg(2+) pocket. Deamido-NAD(+) is bound at residue Arg-140. Thr-160 is a binding site for ATP. Glu-165 contacts Mg(2+). 2 residues coordinate deamido-NAD(+): Lys-173 and Asp-180. ATP is bound by residues Lys-189 and Thr-211. 260–261 (HK) serves as a coordination point for deamido-NAD(+).

It belongs to the NAD synthetase family. In terms of assembly, homodimer.

The catalysed reaction is deamido-NAD(+) + NH4(+) + ATP = AMP + diphosphate + NAD(+) + H(+). The protein operates within cofactor biosynthesis; NAD(+) biosynthesis; NAD(+) from deamido-NAD(+) (ammonia route): step 1/1. Catalyzes the ATP-dependent amidation of deamido-NAD to form NAD. Uses ammonia as a nitrogen source. The chain is NH(3)-dependent NAD(+) synthetase from Listeria welshimeri serovar 6b (strain ATCC 35897 / DSM 20650 / CCUG 15529 / CIP 8149 / NCTC 11857 / SLCC 5334 / V8).